The primary structure comprises 222 residues: MVDEVEKPASLEESKTNTREVEEGAEEVIESDDTMSSLGNPCKAMKHPLEHSWTFWFDNPSGKSKQAAWGSSIRPIYTFSTVEDFWSVYNNIHHPSKLAVGADFHCFKNKIEPKWEDPVCASGGKWTMSFSRGKSDTCWLYTLLAMIGEQFDCGDEICGAVINVRVRQEKIALWTRNAANETAQVSIGKQWKEFLDYNDSIGFIFHDDAKKLDRAAKNRYSV.

Residues 1–22 are compositionally biased toward basic and acidic residues; that stretch reads MVDEVEKPASLEESKTNTREVE. The tract at residues 1–37 is disordered; that stretch reads MVDEVEKPASLEESKTNTREVEEGAEEVIESDDTMSS. Residues 23–33 show a composition bias toward acidic residues; that stretch reads EGAEEVIESDD. EIF4G-binding stretches follow at residues 47–50 and 57–93; these read HPLE and FDNP…NNIH. MRNA contacts are provided by residues 65–70, Lys-97, and 115–116; these read KQAAWG and WE. Cys-120 and Cys-158 are oxidised to a cystine. An EIF4G-binding region spans residues 141-150; sequence YTLLAMIGEQ. MRNA-binding positions include 165-170 and 210-214; these read RVRQEK and KKLDR.

It belongs to the eukaryotic initiation factor 4E family. As to quaternary structure, EIF4F is a multi-subunit complex, the composition of which varies with external and internal environmental conditions. It is composed of at least EIF4A, EIF4E and EIF4G. EIF4E is also known to interact with other partners. In higher plants two isoforms of EIF4F have been identified, named isoform EIF4F and isoform EIF(iso)4F. Isoform EIF4F has subunits p220 and p26, whereas isoform EIF(iso)4F has subunits p82 and p28. According to the redox status, the Cys-120-Cys-158 disulfide bridge may have a role in regulating protein function by affecting its ability to bind capped mRNA. As to expression, expressed ubiquitously in seedlings, roots, leaves, sepals, petals, anthers and dehisced pollen, with highest levels in pollen, maturing anthers and roots. Strongly expressed in susceptible plants but not in resistant ones.

The protein resides in the nucleus. It is found in the cytoplasm. Its function is as follows. Component of the protein complex eIF4F, which is involved in the recognition of the mRNA cap, ATP-dependent unwinding of 5'-terminal secondary structure and recruitment of mRNA to the ribosome. Recognizes and binds the 7-methylguanosine-containing mRNA cap during an early step in the initiation of protein synthesis and facilitates ribosome binding by inducing the unwinding of the mRNAs secondary structures. Key component of recessive resistance to potyviruses. Functionally, (Microbial infection) Susceptibility host factor required for viral infection (e.g. potato virus Y (PVY) and pepper mottle virus (PepMoV)) by recruiting viral RNAs to the host ribosomal complex via an interaction with viral genome-linked protein (VPg). This chain is Eukaryotic translation initiation factor 4E-1, found in Nicotiana tabacum (Common tobacco).